Consider the following 484-residue polypeptide: ATP synthase subunit beta (484 aa).

Residue G169 to T176 participates in ATP binding.

The protein belongs to the ATPase alpha/beta chains family. As to quaternary structure, F-type ATPases have 2 components, CF(1) - the catalytic core - and CF(0) - the membrane proton channel. CF(1) has five subunits: alpha(3), beta(3), gamma(1), delta(1), epsilon(1). CF(0) has three main subunits: a(1), b(2) and c(9-12). The alpha and beta chains form an alternating ring which encloses part of the gamma chain. CF(1) is attached to CF(0) by a central stalk formed by the gamma and epsilon chains, while a peripheral stalk is formed by the delta and b chains.

Its subcellular location is the cell membrane. The catalysed reaction is ATP + H2O + 4 H(+)(in) = ADP + phosphate + 5 H(+)(out). Produces ATP from ADP in the presence of a proton gradient across the membrane. The catalytic sites are hosted primarily by the beta subunits. The protein is ATP synthase subunit beta of Cutibacterium acnes (strain DSM 16379 / KPA171202) (Propionibacterium acnes).